A 625-amino-acid chain; its full sequence is Sorting nexin-41 (625 aa).

Residues 1–90 (MDYNIFEAVH…STSSHAVVEA (90 aa)) are disordered. The span at 54–86 (SPPSSSSLPSSPAHSSSAGSSRASTSSSTSSHA) shows a compositional bias: low complexity. Positions 98 to 235 (VSLSMSTTAT…QKFLNPEFNW (138 aa)) constitute a PX domain. A 1,2-diacyl-sn-glycero-3-phospho-(1D-myo-inositol-3-phosphate) contacts are provided by R153, S155, K179, and R202. 2 coiled-coil regions span residues 437–469 (QFKI…NESL) and 539–563 (QLTE…KDCL).

Belongs to the sorting nexin family. Binds to SNX4.

The protein resides in the prevacuolar compartment. It is found in the endosome. The protein localises to the endosome membrane. Involved in proper sorting of the v-SNARE protein SNC1. This chain is Sorting nexin-41 (SNX41), found in Saccharomyces cerevisiae (strain ATCC 204508 / S288c) (Baker's yeast).